The primary structure comprises 241 residues: Carboxy-S-adenosyl-L-methionine synthase (241 aa).

Residues Tyr-38, 63-65 (GCS), 88-89 (DN), 116-117 (DI), Asn-131, and Arg-198 each bind S-adenosyl-L-methionine.

Belongs to the class I-like SAM-binding methyltransferase superfamily. Cx-SAM synthase family. In terms of assembly, homodimer.

It catalyses the reaction prephenate + S-adenosyl-L-methionine = carboxy-S-adenosyl-L-methionine + 3-phenylpyruvate + H2O. Functionally, catalyzes the conversion of S-adenosyl-L-methionine (SAM) to carboxy-S-adenosyl-L-methionine (Cx-SAM). This Haemophilus influenzae (strain PittEE) protein is Carboxy-S-adenosyl-L-methionine synthase.